Reading from the N-terminus, the 474-residue chain is Glutamine synthetase (474 aa).

The region spanning 14–99 is the GS beta-grasp domain; it reads EKIELIDLKF…VCSIKEPRTG (86 aa). The region spanning 106-474 is the GS catalytic domain; it reads PRVIAQKAID…PYEFSIYYDV (369 aa). Positions 131 and 133 each coordinate Mg(2+). Position 211 (Glu-211) interacts with ATP. Positions 216 and 224 each coordinate Mg(2+). L-glutamate contacts are provided by residues 268–269 and Gly-269; that span reads NG. His-273 provides a ligand contact to Mg(2+). ATP is bound by residues 275–277 and Ser-277; that span reads HQS. L-glutamate contacts are provided by Arg-325, Glu-331, and Arg-343. 3 residues coordinate ATP: Arg-343, Arg-348, and Lys-357. Glu-362 is a Mg(2+) binding site. Arg-364 lines the L-glutamate pocket. Position 402 is an O-AMP-tyrosine (Tyr-402).

Belongs to the glutamine synthetase family. As to quaternary structure, oligomer of 12 subunits arranged in the form of two hexagons. It depends on Mg(2+) as a cofactor.

It is found in the cytoplasm. It carries out the reaction L-glutamate + NH4(+) + ATP = L-glutamine + ADP + phosphate + H(+). Its activity is regulated as follows. The activity of this enzyme could be controlled by adenylation under conditions of abundant glutamine. In terms of biological role, involved in nitrogen metabolism via ammonium assimilation. Catalyzes the ATP-dependent biosynthesis of glutamine from glutamate and ammonia. This Nostoc sp. (strain PCC 7120 / SAG 25.82 / UTEX 2576) protein is Glutamine synthetase.